The sequence spans 494 residues: Glutamyl-tRNA(Gln) amidotransferase subunit A (494 aa).

Residues K81 and S156 each act as charge relay system in the active site. The active-site Acyl-ester intermediate is the S180.

It belongs to the amidase family. GatA subfamily. Heterotrimer of A, B and C subunits.

The catalysed reaction is L-glutamyl-tRNA(Gln) + L-glutamine + ATP + H2O = L-glutaminyl-tRNA(Gln) + L-glutamate + ADP + phosphate + H(+). In terms of biological role, allows the formation of correctly charged Gln-tRNA(Gln) through the transamidation of misacylated Glu-tRNA(Gln) in organisms which lack glutaminyl-tRNA synthetase. The reaction takes place in the presence of glutamine and ATP through an activated gamma-phospho-Glu-tRNA(Gln). The sequence is that of Glutamyl-tRNA(Gln) amidotransferase subunit A from Mycolicibacterium gilvum (strain PYR-GCK) (Mycobacterium gilvum (strain PYR-GCK)).